Here is a 335-residue protein sequence, read N- to C-terminus: Glyoxylate reductase (335 aa).

Residues 159–162, 181–183, and 240–242 each bind NADP(+); these read MGRI, SRS, and TGR. Active-site residues include Arg-242 and Glu-271. Residue His-290 is the Proton donor of the active site. 290–292 provides a ligand contact to NADP(+); that stretch reads HAA.

It belongs to the D-isomer specific 2-hydroxyacid dehydrogenase family. GyaR subfamily. In terms of assembly, homodimer.

The protein localises to the cytoplasm. The catalysed reaction is glycolate + NAD(+) = glyoxylate + NADH + H(+). The sequence is that of Glyoxylate reductase from Aeropyrum pernix (strain ATCC 700893 / DSM 11879 / JCM 9820 / NBRC 100138 / K1).